Here is a 41-residue protein sequence, read N- to C-terminus: Alpha-conotoxin-like Pu1.2 (41 aa).

A propeptide spanning residues 1-21 (LDGRNAAADFETSDLLAMTIR) is cleaved from the precursor. 2 cysteine pairs are disulfide-bonded: C24–C30 and C25–C37. At C37 the chain carries Cysteine amide. Positions 38-41 (GGKR) are excised as a propeptide.

The protein belongs to the conotoxin A superfamily. In terms of processing, non-native isomers 'ribbon' (with disulfide connectivity C1-C4, C2-C3) and 'beads' (with disulfide connectivity C1-C2, C3-C4) also inhibit high voltage-activated (HVA) calcium channel currents in rat DRG neurons (25-30% inhibition at 1 uM toxin). Mutants Pu1.2(9-16), [C3S; C9S]Pu1.2 and [C4S]Pu1.2(1-9) are all C-terminally amidated. Expressed by the venom duct.

It is found in the secreted. Functionally, alpha-conotoxins act on postsynaptic membranes, they bind to the nicotinic acetylcholine receptors (nAChR) and thus inhibit them. This toxin also inhibits high voltage-activated (HVA) calcium channel currents in rat DRG neurons (27% inhibition at 1 uM toxin) probably by activating GABA(B) receptors (GABBR1 and/or GABBR2). The polypeptide is Alpha-conotoxin-like Pu1.2 (Conus pulicarius (Flea-bitten cone)).